A 155-amino-acid polypeptide reads, in one-letter code: Ribosomal RNA large subunit methyltransferase H (155 aa).

S-adenosyl-L-methionine contacts are provided by residues Leu73, Gly104, and 123–128 (ISKMTF).

It belongs to the RNA methyltransferase RlmH family. In terms of assembly, homodimer.

It localises to the cytoplasm. The catalysed reaction is pseudouridine(1915) in 23S rRNA + S-adenosyl-L-methionine = N(3)-methylpseudouridine(1915) in 23S rRNA + S-adenosyl-L-homocysteine + H(+). Functionally, specifically methylates the pseudouridine at position 1915 (m3Psi1915) in 23S rRNA. The chain is Ribosomal RNA large subunit methyltransferase H from Francisella tularensis subsp. novicida (strain U112).